A 406-amino-acid polypeptide reads, in one-letter code: Prenyltransferase phqJ (406 aa).

Positions 1–19 (MTVSTESNFPHGASTQKPQ) are enriched in polar residues. The disordered stretch occupies residues 1–23 (MTVSTESNFPHGASTQKPQSAEP). E99 serves as a coordination point for brevianamide F. Residues R113, K200, and Y202 each contribute to the dimethylallyl diphosphate site. Brevianamide F is bound at residue Y204. Dimethylallyl diphosphate-binding residues include K269, Y271, and Y340.

The protein belongs to the tryptophan dimethylallyltransferase family.

The protein operates within alkaloid biosynthesis. Its function is as follows. Prenyltransferase; part of the gene cluster that mediates the biosynthesis of paraherquamide, a fungal indole alkaloid that belongs to a family of natural products containing a characteristic bicyclo[2.2.2]diazaoctane core. The first steps in the biosynthesis of paraherquamide is the production of the beta-methyl-proline precursor from L-isoleucine. They require oxidation of a terminally hydroxylated L-isoleucine to the corresponding aldehyde by enzymes which have still to be identified. Spontaneous cyclization and dehydration would yield the 4-methyl pyrolline-5-carboxylic acid, which is then reduced by the pyrroline-5-carboxylate reductase phqD leading to the beta-methyl-proline precursor. The next step of paraherquamide biosynthesis involves coupling of beta-methyl-proline and L-tryptophan by the bimodular NRPS phqB, to produce a monooxopiperazine intermediate. The reductase (R) domain of phqB utilizes NADPH for hydride transfer to reduce the thioester bond of the T domain-tethered linear dipeptide to a hemithioaminal intermediate, which spontaneously cleaves the C-S bond to release the aldehyde product. This compound undergoes spontaneous cyclization and dehydration to give a dienamine which is reverse prenylated at C-2 by the reverse prenyltransferase phqJ. The other prenyltransferase present in the cluster, phqI may be a redundant gene in the pathway. During biosynthetic assembly, the key step to produce the polycyclic core is catalyzed by the bifunctional reductase and intramolecular [4+2] Diels-Alderase, phqE, resulting in formation of the [2.2.2] diazaoctane intermediate preparaherquamide. Following formation of preparaherquamide, an indole 2,3-epoxidation-initiated pinacol-like rearrangement is catalyzed by the phqK FAD-dependent monooxygenase. The prenyltransferase phqA, the cytochrome P450 monooxygenase phqL, and the FAD-linked oxidoreductase phqH (or the cytochrome P450 monooxygenase phqM), are proposed to be involved in the formation of the pyran ring. The FAD-dependent monooxygenase phqK is likely responsible for generation of the spiro-oxindole, and the N-methylation is likely mediated by the phqN methyltransferase leading to the isolable natural product paraherquamide F. However, the order of these biosynthetic steps has still to be determined. In late-stage paraherquamide biosynthesis, the third P450 monooxygenase, phqO, is probably responsible for the C-14 hydroxylation, transforming paraherquamide F to paraherquamide G, and paraherquamide E to the final product paraherquamide A. The expansion from the 6-membered ring pyran (in paraherquamides F and G) to the 7-membered dioxepin ring (in paraherquamides A and E) represents a poorly understood but intriguing process that probably involves the 2-oxoglutarate-dependent dioxygenase phqC. Finally, the remaining members of the paraherquamide cluster, including phqI as well as phqM (or phqH), do not have a clearly prescribed role and appear to be redundant. In Penicillium fellutanum, this protein is Prenyltransferase phqJ.